Here is a 914-residue protein sequence, read N- to C-terminus: TRPM8 channel-associated factor 3 (914 aa).

The 300-residue stretch at 533-832 (NSWVSTGLYL…TYLQLQEGFG (300 aa)) folds into the Peptidase M60 domain.

The protein belongs to the TCAF family. Prostate-specific. Present in both dorso-lateral and anterior prostate.

Functionally, may play a role in the regulation of the cation channel TRPM8 activity. This Mus musculus (Mouse) protein is TRPM8 channel-associated factor 3.